The primary structure comprises 195 residues: MSDAPSGPPRLVVGVSGGSGIPYALDILRALRGLDVETHLVVSSGAKRVMSAEGGPQLADLTALASVVHDDRDLAAAVASGSYRTGGMLIVPCSAGTLAKVAHGFADNLISRAAHVTLKERRPLVLVVREDPMPRPMLQNMLAAHDAGATVMSASPGFYHAPESLGELLGFVTARVLDQFGLNAPGFRRWREDEA.

Residues 17–19, serine 43, 94–97, and arginine 129 each bind FMN; these read GGS and SAGT. Positions 159 and 175 each coordinate dimethylallyl phosphate.

This sequence belongs to the UbiX/PAD1 family.

The enzyme catalyses dimethylallyl phosphate + FMNH2 = prenylated FMNH2 + phosphate. Its function is as follows. Flavin prenyltransferase that catalyzes the synthesis of the prenylated FMN cofactor (prenyl-FMN) for 4-hydroxy-3-polyprenylbenzoic acid decarboxylase UbiD. The prenyltransferase is metal-independent and links a dimethylallyl moiety from dimethylallyl monophosphate (DMAP) to the flavin N5 and C6 atoms of FMN. This is Flavin prenyltransferase UbiX from Deinococcus radiodurans (strain ATCC 13939 / DSM 20539 / JCM 16871 / CCUG 27074 / LMG 4051 / NBRC 15346 / NCIMB 9279 / VKM B-1422 / R1).